The primary structure comprises 278 residues: MVRWPGLRPCLSAILNPAGASNMAAAEVPGYLVSPQTEKHRRARNWTDAEMRGLMLVWEEFFDELKQTKRNAKVYEKMASKLFEMTGERRLGEEIKIKITNMTFQYRKLKCMTDSESIPPDWPYYLAIDRILAKVPESCEGKLPDGQQPGPSTSQTEASLSPSAKSTPLYLPYTQCSYEGHFEDDRSDSSSSLLSLKFRSEERPVKKRKMRSCHLQKKKLRLLEAMLEEQRRLSRAMEETCREVRRVLDQQNILQVQSLQLQERMMSLLEKIIAKSNV.

One can recognise a Myb-like domain in the interval R44–I131. The segment at C139–T167 is disordered. Polar residues predominate over residues P149 to S166.

This chain is Myb/SANT-like DNA-binding domain-containing protein 1 (Msantd1), found in Mus musculus (Mouse).